Reading from the N-terminus, the 255-residue chain is Uracil-DNA glycosylase (255 aa).

The segment at 1–20 (MFSASTTPEQPLGLSGDATP) is disordered. Asp99 acts as the Proton acceptor in catalysis.

This sequence belongs to the uracil-DNA glycosylase (UDG) superfamily. UNG family.

It is found in the host nucleus. The catalysed reaction is Hydrolyzes single-stranded DNA or mismatched double-stranded DNA and polynucleotides, releasing free uracil.. In terms of biological role, excises uracil residues from the DNA which can arise as a result of misincorporation of dUMP residues by DNA polymerase or deamination of cytosines. Therefore may reduce deleterious uracil incorporation into the viral genome, particularly in terminally differentiated cells which lack DNA repair enzymes. This Human herpesvirus 2 (strain HG52) (HHV-2) protein is Uracil-DNA glycosylase.